The following is a 124-amino-acid chain: Glycine cleavage system H protein (124 aa).

Positions 22–104 (LVITGITDHA…YGKGWIYKIK (83 aa)) constitute a Lipoyl-binding domain. N6-lipoyllysine is present on lysine 63.

The protein belongs to the GcvH family. The glycine cleavage system is composed of four proteins: P, T, L and H. It depends on (R)-lipoate as a cofactor.

Functionally, the glycine cleavage system catalyzes the degradation of glycine. The H protein shuttles the methylamine group of glycine from the P protein to the T protein. The protein is Glycine cleavage system H protein of Acinetobacter baumannii (strain SDF).